The chain runs to 434 residues: MTTINLIIFTLLIVLTAFFVATEFAIVKIRSSKIDQLILEGKKGAISAKKVITHLDEYLSACQLGITVTALGIGWVGESTFEVILHPLFAHFHVSETVSHVLILVIAFVMATFLHVVVGELAPKTLAIQKAETITLLTAKPIIWFYRILFPFIWFLNGSARFIVGLFGLKPASEHELAHSEEELRILLSESYKSGEINQNELKYVNNIFEFDERIAKEIMIPRREIVAISSEDSYETIVKIIKTESYTRYPVLNGDKDSIIGFINAKEFLSAYIDTDQKIKEDFKLENHINPVIHVIESVPIHDVLVKMQKERTHIAILVDEYGGTSGLVTAEDILEEIVGEIRDEFDKDEVPNIRKVNDNHYILDSKVLIEDVNDLLGTTLASDEVDTIGGWFMTQQIDAAVGSVIEADGYIFKVHETVGRHINYLEIVRKKE.

In terms of domain architecture, CNNM transmembrane spans 1 to 201 (MTTINLIIFT…YKSGEINQNE (201 aa)). Transmembrane regions (helical) follow at residues 7–27 (IIFT…FAIV), 64–84 (LGIT…FEVI), and 101–121 (VLIL…VGEL). CBS domains follow at residues 220 to 282 (MIPR…KIKE) and 289 to 346 (HINP…IRDE).

It belongs to the UPF0053 family.

Its subcellular location is the cell membrane. The protein is UPF0053 protein YrkA (yrkA) of Bacillus subtilis (strain 168).